A 235-amino-acid polypeptide reads, in one-letter code: Ubiquinone/menaquinone biosynthesis C-methyltransferase UbiE (235 aa).

S-adenosyl-L-methionine contacts are provided by Thr-59, Asp-84, and Ser-123.

Belongs to the class I-like SAM-binding methyltransferase superfamily. MenG/UbiE family.

The enzyme catalyses a 2-demethylmenaquinol + S-adenosyl-L-methionine = a menaquinol + S-adenosyl-L-homocysteine + H(+). It catalyses the reaction a 2-methoxy-6-(all-trans-polyprenyl)benzene-1,4-diol + S-adenosyl-L-methionine = a 5-methoxy-2-methyl-3-(all-trans-polyprenyl)benzene-1,4-diol + S-adenosyl-L-homocysteine + H(+). Its pathway is quinol/quinone metabolism; menaquinone biosynthesis; menaquinol from 1,4-dihydroxy-2-naphthoate: step 2/2. The protein operates within cofactor biosynthesis; ubiquinone biosynthesis. Methyltransferase required for the conversion of demethylmenaquinol (DMKH2) to menaquinol (MKH2) and the conversion of 2-polyprenyl-6-methoxy-1,4-benzoquinol (DDMQH2) to 2-polyprenyl-3-methyl-6-methoxy-1,4-benzoquinol (DMQH2). The chain is Ubiquinone/menaquinone biosynthesis C-methyltransferase UbiE from Campylobacter jejuni subsp. jejuni serotype O:23/36 (strain 81-176).